The primary structure comprises 194 residues: Orotate phosphoribosyltransferase (194 aa).

5-phospho-alpha-D-ribose 1-diphosphate-binding positions include arginine 102, lysine 103, lysine 106, histidine 108, and 129-137 (EDVVTTGGS). Orotate contacts are provided by threonine 133 and arginine 161.

It belongs to the purine/pyrimidine phosphoribosyltransferase family. PyrE subfamily. As to quaternary structure, homodimer. It depends on Mg(2+) as a cofactor.

The catalysed reaction is orotidine 5'-phosphate + diphosphate = orotate + 5-phospho-alpha-D-ribose 1-diphosphate. It participates in pyrimidine metabolism; UMP biosynthesis via de novo pathway; UMP from orotate: step 1/2. In terms of biological role, catalyzes the transfer of a ribosyl phosphate group from 5-phosphoribose 1-diphosphate to orotate, leading to the formation of orotidine monophosphate (OMP). This is Orotate phosphoribosyltransferase from Synechococcus sp. (strain CC9902).